Consider the following 2471-residue polypeptide: Polyprotein P1234 (2471 aa).

The Alphavirus-like MT domain maps to 28-257; sequence EATQVTDNDH…EERILLRSWH (230 aa). Residues 242–261 are nsP1 membrane-binding; that stretch reads GSTIYTEERILLRSWHLPNV. Cys-417 carries the S-palmitoyl cysteine; by host lipid modification. Residues 688 to 839 form the (+)RNA virus helicase ATP-binding domain; that stretch reads DLVDPPFHEF…HEICTEVYHK (152 aa). Residue 719-726 participates in a ribonucleoside 5'-triphosphate binding; the sequence is GVPGSGKS. Positions 840–988 constitute a (+)RNA virus helicase C-terminal domain; sequence SISRRCTRTV…LEEWQAEHDA (149 aa). The Peptidase C9 domain occupies 1001–1320; sequence DVYQNKVHVC…VVLNNIYQGS (320 aa). Residues 1002-1021 form a nucleolus localization signal region; that stretch reads VYQNKVHVCWAKALEPVLAT. Catalysis depends on Cys-1010, which acts as the For cysteine protease nsP2 activity. The Nuclear export signal signature appears at 1054 to 1063; sequence TRFFGVDIDS. The For cysteine protease nsP2 activity role is filled by His-1079. The short motif at 1177–1181 is the Nuclear localization signal element; it reads PGKRV. A Macro domain is found at 1328–1486; the sequence is APAYRVIRGD…RIKDAIARKE (159 aa). Residues Asp-1337, Asn-1351, Gly-1359, Gly-1438, Val-1439, and Tyr-1440 each coordinate ADP-D-ribose. Residues Cys-1589, Cys-1591, Cys-1614, and Cys-1632 each coordinate Zn(2+). A disordered region spans residues 1669-1692; it reads RRPAPPVPVPARIPSPRCSPAVSM. The segment covering 1670–1681 has biased composition (pro residues); sequence RPAPPVPVPARI. A binding to host G3BP family members region spans residues 1771–1783; it reads LITFDSVTDIFEN. The segment at 1798-1838 is disordered; it reads IPAPRRRREPETDIQRFDKSEEKPVPKPRTRTAKYKKPPGV. Residues 1805–1822 are compositionally biased toward basic and acidic residues; that stretch reads REPETDIQRFDKSEEKPV. The span at 1823-1834 shows a compositional bias: basic residues; that stretch reads PKPRTRTAKYKK. The interval 1835 to 1851 is binding to host FXR family members; that stretch reads PPGVARSISEAELDEFI. The region spanning 2228–2343 is the RdRp catalytic domain; that stretch reads DAVLETDIAS…KGVKSDALMA (116 aa).

In terms of assembly, interacts with non-structural protein 3. Interacts with RNA-directed RNA polymerase nsP4. Interacts with protease nsP2. interacts with itself. As to quaternary structure, interacts with mRNA-capping enzyme nsP1. Interacts with host DDX1. Interacts with host DDX3. Interacts (via C-terminus) with host FXR1; this interaction inhibits the formation of host stress granules on viral mRNAs and the nsp3-FXR1 complexes bind viral RNAs and probably orchestrate the assembly of viral replication complexes. Interacts (via C-terminus) with host FXR2; this interaction inhibits the formation of host stress granules on viral mRNAs and the nsp3-FXR2 complexes bind viral RNAs and probably orchestrate the assembly of viral replication complexes. Interacts (via C-terminus) with host FMR1; this interaction inhibits the formation of host stress granules on viral mRNAs and the nsp3-FMR1 complexes bind viral RNAs and probably orchestrate the assembly of viral replication complexes. Interacts (via C-terminus) with host G3BP1; this interaction inhibits the formation of host stress granules on viral mRNAs and the nsp3-G3BP1 complexes bind viral RNAs and probably orchestrate the assembly of viral replication complexes. Interacts (via C-terminus) with host G3BP2; this interaction inhibits the formation of host stress granules on viral mRNAs and the nsp3-G3BP2 complexes bind viral RNAs and probably orchestrate the assembly of viral replication complexes. Interacts with mRNA-capping enzyme nsP1. Interacts with protease nsP2. interacts with itself. In terms of assembly, interacts with RNA-directed RNA polymerase nsP4. Interacts with mRNA-capping enzyme nsP1. Interacts with KPNA1/karyopherin-alpha1; this interaction probably allows the active transport of protease nsP2 into the host nucleus. Mg(2+) serves as cofactor. Requires Mn(2+) as cofactor. Specific enzymatic cleavages in vivo yield mature proteins. The processing of the polyprotein is temporally regulated. In early stages (1.7 hpi), P1234 is first cleaved in trans through its nsP2 protease activity, releasing P123' and nsP4, which associate to form the early replication complex. At the same time, P1234 is also cut at the nsP1/nsP2 site early in infection but with lower efficiency. After replication of the viral minus-strand RNAs (4 hpi), the polyproteins are cut at the nsP1/nsP2 and nsP2/nsP3 sites very efficiently, preventing accumulation of P123' and P1234 and allowing the formation of the late replication complex. NsP3'/nsP4 site is not cleaved anymore and P34 is produced rather than nsP4. Post-translationally, specific enzymatic cleavages in vivo yield mature proteins. The processing of the polyprotein is temporally regulated. In early stages (1.7 hpi), P123 is cleaved at the nsP1/nsP2 site with low efficiency. After replication of the viral minus-strand RNAs (4 hpi), the polyproteins are cut at the nsP1/nsP2 and nsP2/nsP3 sites very efficiently, preventing accumulation of P123 and allowing the formation of the late replication complex. In terms of processing, specific enzymatic cleavages in vivo yield mature proteins. The processing of the polyprotein is temporally regulated. In early stages (1.7 hpi), P123' is cleaved at the nsP1/nsP2 site with low efficiency. After replication of the viral minus-strand RNAs (4 hpi), the polyproteins are cut at the nsP1/nsP2 and nsP2/nsP3 sites very efficiently, preventing accumulation of P123' and allowing the formation of the late replication complex. Palmitoylated by host palmitoyltransferases ZDHHC2 and ZDHHC19. Post-translationally, phosphorylated by host on serines and threonines. In terms of processing, ubiquitinated; targets the protein for rapid degradation via the ubiquitin system. Nsp4 is present in extremely low quantities due to low frequency of translation through the amber stop-codon and the degradation by the ubiquitin pathway.

It localises to the host cytoplasmic vesicle membrane. The protein localises to the host cell membrane. Its subcellular location is the host cell projection. It is found in the host filopodium. The protein resides in the host nucleus. It localises to the host cytoplasm. It catalyses the reaction GTP + S-adenosyl-L-methionine = N(7)-methyl-GTP + S-adenosyl-L-homocysteine. The catalysed reaction is N(7)-methyl-GTP + L-histidyl-[protein] = N(tele)-(N(7)-methylguanosine 5'-phospho)-L-histidyl-[protein] + diphosphate. It carries out the reaction N(tele)-(N(7)-methylguanosine 5'-phospho)-L-histidyl-[protein] + a 5'-end diphospho-(purine-ribonucleoside) in mRNA + H(+) = a 5'-end (N(7)-methyl 5'-triphosphoguanosine)-(purine-ribonucleoside) in mRNA + L-histidyl-[protein]. The enzyme catalyses a 5'-end triphospho-ribonucleoside in mRNA + H2O = a 5'-end diphospho-ribonucleoside in mRNA + phosphate + H(+). It catalyses the reaction a ribonucleoside 5'-triphosphate + H2O = a ribonucleoside 5'-diphosphate + phosphate + H(+). The catalysed reaction is ATP + H2O = ADP + phosphate + H(+). It carries out the reaction RNA(n) + a ribonucleoside 5'-triphosphate = RNA(n+1) + diphosphate. The enzyme catalyses 4-O-(ADP-D-ribosyl)-L-aspartyl-[protein] + H2O = L-aspartyl-[protein] + ADP-D-ribose + H(+). It catalyses the reaction 5-O-(ADP-D-ribosyl)-L-glutamyl-[protein] + H2O = L-glutamyl-[protein] + ADP-D-ribose + H(+). The catalysed reaction is RNA(n) + ATP = RNA(n)-3'-adenine ribonucleotide + diphosphate. It carries out the reaction ADP-alpha-D-ribose 1''-phosphate + H2O = ADP-D-ribose + phosphate. Its activity is regulated as follows. Inhibited by sinefungin. Functionally, inactive precursor of the viral replicase, which is activated by cleavages carried out by the viral protease nsP2. Its function is as follows. The early replication complex formed by the polyprotein P123 and nsP4 synthesizes the minus-strand RNAs (antigenome). Polyprotein P123 is a short-lived polyprotein that accumulates during early stage of infection. As soon P123 is cleaved into mature proteins, the plus-strand RNAs synthesis begins. The early replication complex formed by the polyprotein P123' and nsP4 synthesizes minus-strand RNAs (antigenome). Polyprotein P123' is a short-lived polyprotein that accumulates during early stage of infection. As soon P123' is cleaved into mature proteins, the plus-strand RNAs synthesis begins. In terms of biological role, cytoplasmic capping enzyme that catalyzes two virus-specific reactions: methyltransferase and nsP1 guanylyltransferase. mRNA-capping is necessary since all viral RNAs are synthesized in the cytoplasm, and host capping enzymes are restricted to the nucleus. The enzymatic reaction involves a covalent link between 7-methyl-GMP and nsP1, whereas eukaryotic capping enzymes form a covalent complex only with GMP. NsP1 capping consists in the following reactions: GTP is first methylated into 7-methyl-GMP and then is covalently linked to nsP1 to form the m7GMp-nsP1 complex from which 7-methyl-GMP complex is transferred to the mRNA to create the cap structure. NsP1 is also needed for the initiation of the minus-strand RNAs synthesis. Probably serves as a membrane anchor for the replication complex composed of nsP1-nsP4. Nsp1 is needed for the initiation of the minus-strand RNAs synthesis. Palmitoylated nsP1 is remodeling host cell cytoskeleton, and induces filopodium-like structure formation at the surface of the host cell. Functionally, multifunctional protein whose N-terminus is part of the RNA polymerase complex and displays NTPase, RNA triphosphatase and helicase activities. NTPase and RNA triphosphatase are involved in viral RNA capping and helicase keeps a check on the dsRNA replication intermediates. The C-terminus harbors a protease that specifically cleaves the polyproteins and releases the mature proteins. Required for the shutoff of minus-strand RNAs synthesis. Inhibits host translation to ensure maximal viral gene expression and evade host immune response. Its function is as follows. Seems to be essential for minus-strand RNAs and subgenomic 26S mRNAs synthesis. Displays mono-ADP-ribosylhydrolase activity. ADP-ribosylation is a post-translational modification that controls various processes of the host cell and the virus probably needs to revert it for optimal viral replication. Binds proteins of FXR and G3BP families and sequesters them into the viral RNA replication complexes thereby inhibiting the formation of host stress granules on viral mRNAs. The nsp3-FXR and nsp3-G3BP complexes bind viral RNAs and probably orchestrate the assembly of viral replication complexes, thanks to the ability of G3BP and FXR family members to self-assemble and bind DNA. Seems to be essential for minus-strand RNAs and subgenomic 26S mRNAs synthesis. Displays mono-ADP-ribosylhydrolase activity. ADP-ribosylation is a post-translational modification that controls various processes of the host cell and the virus probably needs to revert it for optimal viral replication. Binds proteins of FXR and G3BP families and sequesters them into the viral RNA replication complexes thereby inhibiting the formation of host stress granules on viral mRNAs. The nsp3'-FXR and nsp3-G3BP complexes bind viral RNAs and probably orchestrate the assembly of viral replication complexes, thanks to the ability of G3BP and FXR family members to self-assemble and bind DNA. In terms of biological role, RNA dependent RNA polymerase. Replicates genomic and antigenomic RNA by recognizing replications specific signals. The early replication complex formed by the polyprotein P123 and nsP4 synthesizes minus-strand RNAs. The late replication complex composed of fully processed nsP1-nsP4 is responsible for the production of genomic and subgenomic plus-strand RNAs. The sequence is that of Polyprotein P1234 from Eastern equine encephalitis virus (strain PE-0.0155) (EEEV).